A 179-amino-acid polypeptide reads, in one-letter code: Probable RNA 2'-phosphotransferase (179 aa).

Belongs to the KptA/TPT1 family.

Removes the 2'-phosphate from RNA via an intermediate in which the phosphate is ADP-ribosylated by NAD followed by a presumed transesterification to release the RNA and generate ADP-ribose 1''-2''-cyclic phosphate (APPR&gt;P). May function as an ADP-ribosylase. This chain is Probable RNA 2'-phosphotransferase, found in Fusobacterium nucleatum subsp. nucleatum (strain ATCC 25586 / DSM 15643 / BCRC 10681 / CIP 101130 / JCM 8532 / KCTC 2640 / LMG 13131 / VPI 4355).